A 313-amino-acid polypeptide reads, in one-letter code: Small ribosomal subunit protein uS2 (313 aa).

The span at 228–256 shows a compositional bias: basic and acidic residues; sequence RQEDKAAEAQDKDAQDTEDNKGARPRGAE. Residues 228–313 are disordered; sequence RQEDKAAEAQ…VSKAGDKPKK (86 aa).

This sequence belongs to the universal ribosomal protein uS2 family.

This is Small ribosomal subunit protein uS2 from Amoebophilus asiaticus (strain 5a2).